Here is a 177-residue protein sequence, read N- to C-terminus: ATP synthase subunit delta (177 aa).

Belongs to the ATPase delta chain family. In terms of assembly, F-type ATPases have 2 components, F(1) - the catalytic core - and F(0) - the membrane proton channel. F(1) has five subunits: alpha(3), beta(3), gamma(1), delta(1), epsilon(1). F(0) has three main subunits: a(1), b(2) and c(10-14). The alpha and beta chains form an alternating ring which encloses part of the gamma chain. F(1) is attached to F(0) by a central stalk formed by the gamma and epsilon chains, while a peripheral stalk is formed by the delta and b chains.

Its subcellular location is the cell inner membrane. Functionally, f(1)F(0) ATP synthase produces ATP from ADP in the presence of a proton or sodium gradient. F-type ATPases consist of two structural domains, F(1) containing the extramembraneous catalytic core and F(0) containing the membrane proton channel, linked together by a central stalk and a peripheral stalk. During catalysis, ATP synthesis in the catalytic domain of F(1) is coupled via a rotary mechanism of the central stalk subunits to proton translocation. This protein is part of the stalk that links CF(0) to CF(1). It either transmits conformational changes from CF(0) to CF(1) or is implicated in proton conduction. The protein is ATP synthase subunit delta of Shewanella oneidensis (strain ATCC 700550 / JCM 31522 / CIP 106686 / LMG 19005 / NCIMB 14063 / MR-1).